Here is a 195-residue protein sequence, read N- to C-terminus: Small ribosomal subunit protein uS4c (195 aa).

Residues 82–143 (MRLDNILFRL…KQRSKALIQN (62 aa)) form the S4 RNA-binding domain.

The protein belongs to the universal ribosomal protein uS4 family. As to quaternary structure, part of the 30S ribosomal subunit. Contacts protein S5. The interaction surface between S4 and S5 is involved in control of translational fidelity.

The protein resides in the plastid. It localises to the chloroplast. One of the primary rRNA binding proteins, it binds directly to 16S rRNA where it nucleates assembly of the body of the 30S subunit. Its function is as follows. With S5 and S12 plays an important role in translational accuracy. The protein is Small ribosomal subunit protein uS4c (rps4) of Watsonia angusta.